We begin with the raw amino-acid sequence, 157 residues long: AP-1 complex subunit sigma-2 (157 aa).

Belongs to the adaptor complexes small subunit family. As to quaternary structure, adaptor protein complex 1 (AP-1) is a heterotetramer composed of two large adaptins (gamma-type subunit AP1G1 and beta-type subunit AP1B1), a medium adaptin (mu-type subunit AP1M1 or AP1M2) and a small adaptin (sigma-type subunit AP1S1 or AP1S2 or AP1S3). Binds to MUC1. As to expression, widely expressed.

The protein localises to the golgi apparatus. It localises to the cytoplasmic vesicle membrane. Its subcellular location is the membrane. It is found in the clathrin-coated pit. Functionally, subunit of clathrin-associated adaptor protein complex 1 that plays a role in protein sorting in the late-Golgi/trans-Golgi network (TGN) and/or endosomes. The AP complexes mediate both the recruitment of clathrin to membranes and the recognition of sorting signals within the cytosolic tails of transmembrane cargo molecules. This Homo sapiens (Human) protein is AP-1 complex subunit sigma-2 (AP1S2).